Here is a 149-residue protein sequence, read N- to C-terminus: Snake venom vascular endothelial growth factor toxin 2 (149 aa).

A signal peptide spans 1–24; that stretch reads MAAYLLAVAILFCIQGWPSGTVQG. Gln25 carries the pyrrolidone carboxylic acid modification. 3 cysteine pairs are disulfide-bonded: Cys38–Cys80, Cys69–Cys115, and Cys73–Cys117. Positions 118 to 149 are disordered; sequence RPRSGRVNSGKRKRNPEEGGAESQVPLGLTSF.

It belongs to the PDGF/VEGF growth factor family. Snake venom VEGF subfamily. Homodimer; disulfide-linked. Interacts with VEGF receptor-1 (FLT1) with a high affinity, whereas it binds to VEGF receptor-2 (KDR) with a low affinity. Does not bind VEGF receptor-3 (FLT4). As to expression, expressed by the venom gland.

The protein localises to the secreted. In terms of biological role, snake venom VEGFs that may contribute to venom dispersion and prey subjugation by inducing vascular permeability and hypotension. This protein induces an increase in capillary permeability after intradermal injection, as well as a drastic hypotensive effect after intravenous injection. The hypotension is mediated by nitric oxide (NO), which is produced by VEGF-activated endothelium NO synthase. Also induces angiogenesis in vitro. Like other crotalid VEGFs, this protein interacts with VEGF receptor-1 (FLT1) with a high affinity, whereas it binds to VEGF receptor-2 (KDR) with a low affinity. This chain is Snake venom vascular endothelial growth factor toxin 2, found in Sistrurus catenatus edwardsii (Desert massasauga).